Consider the following 529-residue polypeptide: Protein PAT1 homolog 2 (529 aa).

The segment at 153-183 is disordered; that stretch reads QILQQQQRWRRRRSPTARSVPAQKPWSREPA.

The protein belongs to the PAT1 family. Interacts with LSM1.

The protein resides in the cytoplasm. The protein localises to the nucleus. Its function is as follows. RNA-binding protein that acts as a translational repressor. The sequence is that of Protein PAT1 homolog 2 (Patl2) from Mus musculus (Mouse).